The sequence spans 187 residues: Threonylcarbamoyl-AMP synthase (187 aa).

The YrdC-like domain maps to Thr-4–Asp-187.

This sequence belongs to the SUA5 family. TsaC subfamily.

It localises to the cytoplasm. The catalysed reaction is L-threonine + hydrogencarbonate + ATP = L-threonylcarbamoyladenylate + diphosphate + H2O. Functionally, required for the formation of a threonylcarbamoyl group on adenosine at position 37 (t(6)A37) in tRNAs that read codons beginning with adenine. Catalyzes the conversion of L-threonine, HCO(3)(-)/CO(2) and ATP to give threonylcarbamoyl-AMP (TC-AMP) as the acyladenylate intermediate, with the release of diphosphate. The polypeptide is Threonylcarbamoyl-AMP synthase (Xanthomonas euvesicatoria pv. vesicatoria (strain 85-10) (Xanthomonas campestris pv. vesicatoria)).